The chain runs to 179 residues: MSVSVGVLAIQGGFQKHAEMLESLGVEVKLVKFTNDFDEIDRLIIPGGESTALLNLLTKHQIFDKLQDFCSQNPVFGTCAGSIILSKGSQYLSLIDLEVERNGYGRQVDSFVTNLGFMGNSIKAVFIRAPKFTRVGDNIDVLAKFDDLPVLVRQGNILVSSFHPELTEDSSVHKYFLNM.

48–50 is a binding site for L-glutamine; it reads GES. The active-site Nucleophile is the C79. L-glutamine is bound by residues R101 and 127 to 128; that span reads IR. Residues H163 and E165 each act as charge relay system in the active site.

Belongs to the glutaminase PdxT/SNO family. In the presence of PdxS, forms a dodecamer of heterodimers. Only shows activity in the heterodimer.

The catalysed reaction is aldehydo-D-ribose 5-phosphate + D-glyceraldehyde 3-phosphate + L-glutamine = pyridoxal 5'-phosphate + L-glutamate + phosphate + 3 H2O + H(+). It carries out the reaction L-glutamine + H2O = L-glutamate + NH4(+). The protein operates within cofactor biosynthesis; pyridoxal 5'-phosphate biosynthesis. Catalyzes the hydrolysis of glutamine to glutamate and ammonia as part of the biosynthesis of pyridoxal 5'-phosphate. The resulting ammonia molecule is channeled to the active site of PdxS. This is Pyridoxal 5'-phosphate synthase subunit PdxT from Francisella philomiragia subsp. philomiragia (strain ATCC 25017 / CCUG 19701 / FSC 153 / O#319-036).